The sequence spans 118 residues: Large ribosomal subunit protein bL17 (118 aa).

It belongs to the bacterial ribosomal protein bL17 family. In terms of assembly, part of the 50S ribosomal subunit. Contacts protein L32.

In Phytoplasma australiense, this protein is Large ribosomal subunit protein bL17.